The primary structure comprises 503 residues: Maturase K (503 aa).

Belongs to the intron maturase 2 family. MatK subfamily.

Its subcellular location is the plastid. The protein localises to the chloroplast. In terms of biological role, usually encoded in the trnK tRNA gene intron. Probably assists in splicing its own and other chloroplast group II introns. This is Maturase K from Rosa foetida (Austrian briar).